The primary structure comprises 1224 residues: MKSFLNKNKNSKKIIILDDNDFSKYQQRYDLQNQNIEIVSSPLQNIRSQQINDGVQMSGSIQSDLSSSDNFTSSGGFGGGGNSSSNTSNRNSDNSTQRPLMVDIGLEYKYRLALEQNPNDFKALVKWGSLIYKNIKNQMGGKHVDVCLMDWNEELIPIPQNNNNHHNHNHHNNHTSGNFTGNINSNTTLSNSFFETLNSFNLREPLFDVCGKYQSSLQLSGGSNLLNIPFSTLLNYNLNEQLNILVNNLNNSSPSSSSSSIKTKNTTSTTTTTTTTKNLNDISNNINNSRVLRSVSLPPAPPPPPTEDPNSPWSDPILWMKWGDCLFLLCTYLELPMYRATCEKYFKCIQILFKQQEKQHQQQQQQQQNQQDKEKFEKQNNYNIKLLAIVLRKWGITLSRYSRRMKSQFLMSEWTSDENIQVEELWKVLHSQSIQSLLISNKISPSLVTQYHLATAYHRHAITLNQFGCQSKEEIYGLITNSCKIYYETLLESLSDTFLQQLQLQQQQQPWHDIEYYNNNEIFNDQFKSKSLENWGRALDVQLSTKLNDEEETIEKEEEDLNSVDEYLTTFSKSVLKGVTPSLEGVVSLCLNSKQALQYKAINSVSVLCRSSEIVKSPIYNELMDQMTKVESFVSKRDDAESLLSQQKTLKSMPPKLQAYVRMSGLGEEEIMRNFEIAWNSIYFLTKDTIPNQPIPPNYYRSNKKNKLKQRQLNDSNNQDEKEEPEEIKPPLLPSIHRTNQLNNNNNNNNNINNNNINNNNINNNKNGNSGGETPSPSSSFVITPFTSNSQSKFNTQRQFLSNSTLFNLSSSGIFTNNNNNNNGGSTITTTTTNNISPTKTNGWTLTLPSKAPTRRATVSLININDLINQQQQNQINSVSTLSQNNIILNNNNNLDNKPISKYIPNSIIRTTVNPPLLSRCDETIFSSGTPLPLFRDKIKLGTGAFGNVFYAIRKSDSSPVAIKVLMERTKKDSPIIPELYIHSACNHSNIVTYIESYLCKGHVWIILEYCDGGTVRDLLQATCTPGNPNNLQLFEETLIAYIITELLEGLVYLRSKGIIHRDLKSRNILLTRKGKVKIADFGLATTCSLGRGRTRMCGTMGRIAPEVIRREPYDTQSDIYSLGCLIIEMAEGTVPYGKDSSLKALFYTAIHQYKLPNPKKYTKEFVDFLYLCLNPDPFKRPTPEMLLHHTFLSGADRGKSILLGRFKNQDTRKNLLLDNFVAF.

2 disordered regions span residues 57-98 (MSGS…STQR) and 252-284 (SSPS…DISN). 2 stretches are compositionally biased toward low complexity: residues 58–74 (SGSI…FTSS) and 83–95 (SSSN…SDNS). Coiled coils occupy residues 352–381 (LFKQ…KQNN) and 540–569 (DVQL…EYLT). Disordered stretches follow at residues 693-784 (QPIP…FVIT) and 815-836 (FTNN…TNNI). Over residues 743 to 768 (NNNNNNNNNINNNNINNNNINNNKNG) the composition is skewed to low complexity. Over residues 772 to 784 (GETPSPSSSFVIT) the composition is skewed to polar residues. Residues 935 to 1193 (FRDKIKLGTG…PEMLLHHTFL (259 aa)) form the Protein kinase domain. ATP contacts are provided by residues 941–949 (LGTGAFGNV) and Lys964. The active-site Proton acceptor is the Asp1063.

The protein belongs to the protein kinase superfamily. Ser/Thr protein kinase family. Mg(2+) is required as a cofactor.

The enzyme catalyses L-seryl-[protein] + ATP = O-phospho-L-seryl-[protein] + ADP + H(+). The catalysed reaction is L-threonyl-[protein] + ATP = O-phospho-L-threonyl-[protein] + ADP + H(+). This Dictyostelium discoideum (Social amoeba) protein is Probable serine/threonine-protein kinase DDB_G0292350.